Here is a 233-residue protein sequence, read N- to C-terminus: Defense protein 3 (233 aa).

Residues methionine 1–serine 17 form the signal peptide. Residues arginine 18–arginine 45 constitute a propeptide that is removed on maturation.

This sequence belongs to the attacin/sarcotoxin-2 family.

The protein resides in the secreted. In terms of biological role, has antibacterial activity against both Gram-positive and Gram-negative bacteria. In Lonomia obliqua (Moth), this protein is Defense protein 3.